A 125-amino-acid polypeptide reads, in one-letter code: Large ribosomal subunit protein uL24 (125 aa).

Belongs to the universal ribosomal protein uL24 family. As to quaternary structure, part of the 50S ribosomal subunit.

Its function is as follows. One of two assembly initiator proteins, it binds directly to the 5'-end of the 23S rRNA, where it nucleates assembly of the 50S subunit. In terms of biological role, one of the proteins that surrounds the polypeptide exit tunnel on the outside of the subunit. The polypeptide is Large ribosomal subunit protein uL24 (Mycoplasma mobile (strain ATCC 43663 / 163K / NCTC 11711) (Mesomycoplasma mobile)).